Consider the following 501-residue polypeptide: Nucleic-acid-binding protein from transposon X-element (501 aa).

Disordered stretches follow at residues 20–71 (SSPQ…GNSN) and 105–128 (AAAK…SKPP). A CCHC-type zinc finger spans residues 285-302 (VQCHRCQQIGHTAKYCRK). 2 disordered regions span residues 353 to 385 (RPRS…SRGG) and 400 to 443 (QPMS…TDAS). Over residues 407-422 (QQQKQKQQPYDGSPSR) the composition is skewed to low complexity. The span at 434–443 (GTLQRSTDAS) shows a compositional bias: polar residues.

It is found in the virion. Its function is as follows. Strongly basic protein that binds directly to retroviral RNA and may be involved in its packaging and in the reverse transcription process. The chain is Nucleic-acid-binding protein from transposon X-element from Drosophila melanogaster (Fruit fly).